A 198-amino-acid chain; its full sequence is Protein UNCMA_24250 (198 aa).

One can recognise an AMMECR1 domain in the interval 5-194 (EDGTLAVKTA…ETEPGGPVIE (190 aa)).

In Methanocella arvoryzae (strain DSM 22066 / NBRC 105507 / MRE50), this protein is Protein UNCMA_24250.